Here is a 354-residue protein sequence, read N- to C-terminus: Protein RecA (354 aa).

Glycine 67–threonine 74 contacts ATP.

Belongs to the RecA family.

Its subcellular location is the cytoplasm. Functionally, can catalyze the hydrolysis of ATP in the presence of single-stranded DNA, the ATP-dependent uptake of single-stranded DNA by duplex DNA, and the ATP-dependent hybridization of homologous single-stranded DNAs. It interacts with LexA causing its activation and leading to its autocatalytic cleavage. This chain is Protein RecA, found in Enterobacter agglomerans (Erwinia herbicola).